Here is a 94-residue protein sequence, read N- to C-terminus: Alpha-conotoxin Cp20.3 (94 aa).

The N-terminal stretch at 1 to 24 (MPKLAVVLLVLLILPLSYFDAAGG) is a signal peptide. A propeptide spanning residues 25–45 (QAVQGDRRGNGLARYLQRGDR) is cleaved from the precursor. Glutamate 46 bears the 4-carboxyglutamate; partial mark. Glutamate 49 bears the 4-carboxyglutamate mark. Proline 55 carries the post-translational modification 4-hydroxyproline. Intrachain disulfides connect cysteine 63-cysteine 72, cysteine 68-cysteine 80, cysteine 73-cysteine 90, and cysteine 78-cysteine 92.

Belongs to the conotoxin D superfamily. As to quaternary structure, hetero-, homo- or pseudo-homodimer (identical sequence, different post-translational modifications). In terms of tissue distribution, expressed by the venom duct.

It localises to the secreted. Its function is as follows. Alpha-D-conopeptides act on postsynaptic membranes, they bind to the nicotinic acetylcholine receptors (nAChR) and thus inhibit them. Through its two C-terminal domains, this homodimeric protein would bind to two nAChR allosteric sites, located outside the nAChR C-loop of the principal binding face and at the adjacent binding interface in a clockwise direction. This toxin specifically blocks mammalian neuronal nAChR of the alpha-7/CHRNA7 (IC(50)=0.25 nM), alpha-3-beta-2/CHRNA3-CHRNB2 (IC(50)=2.8 nM), and alpha-4-beta-2/CHRNA4-CHRNB2 (IC(50)=28.6 nM) subtypes. Has no effect on alpha-3-beta-4/CHRNA3-CHRNB4, alpha-4-beta-4/CHRNA4-CHRNB4 and alpha-1-beta-1-epsilon-delta/CHRNA1-CHRNB1-CHRNE-CHRND subtypes of nAChRs. This chain is Alpha-conotoxin Cp20.3, found in Conus capitaneus (Captain cone).